Consider the following 78-residue polypeptide: UPF0291 protein Ldb1355 (78 aa).

This sequence belongs to the UPF0291 family.

Its subcellular location is the cytoplasm. The protein is UPF0291 protein Ldb1355 of Lactobacillus delbrueckii subsp. bulgaricus (strain ATCC 11842 / DSM 20081 / BCRC 10696 / JCM 1002 / NBRC 13953 / NCIMB 11778 / NCTC 12712 / WDCM 00102 / Lb 14).